The following is a 246-amino-acid chain: Serine protease 1 (246 aa).

Residues 1–17 (MKTFIFLALLGAAVAFP) form the signal peptide. The propeptide at 18–23 (VDDDDK) is activation peptide. One can recognise a Peptidase S1 domain in the interval 24 to 244 (IVGGYTCGAN…YVSWIKQTIA (221 aa)). 6 disulfides stabilise this stretch: Cys30/Cys160, Cys48/Cys64, Cys132/Cys233, Cys139/Cys206, Cys171/Cys185, and Cys196/Cys220. His63 serves as the catalytic Charge relay system. Ca(2+) is bound by residues Glu75, Asn77, Val80, and Glu85. The active-site Charge relay system is the Asp107. Substrate contacts are provided by residues 194 to 195 (DS), 197 to 198 (QG), and Ser200. Residue Ser200 is the Charge relay system of the active site.

Belongs to the peptidase S1 family. In terms of assembly, interacts with SERPINA1. Ca(2+) is required as a cofactor. In terms of processing, autocatalytic cleavage after Lys-23 leads to beta-trypsin by releasing a terminal hexapeptide. Subsequent cleavage after Lys-148 leads to alpha-trypsin. Further cleavage after Lys-193 yields pseudotrypsin. A cleavage may also occur after Arg-122. Post-translationally, not sulfated on tyrosine residue(s). Synthesized in the acinar cells of the pancreas.

It is found in the secreted. The protein resides in the extracellular space. The catalysed reaction is Preferential cleavage: Arg-|-Xaa, Lys-|-Xaa.. With respect to regulation, is inhibited by scorpion cyclotide trypsin inhibitor TopI1. The polypeptide is Serine protease 1 (PRSS1) (Bos taurus (Bovine)).